We begin with the raw amino-acid sequence, 261 residues long: MTHQLHAYHMVKPSPWPLTGALSAFLLTSGLIMWFHFYSTALLTLGLLTNVLTMYQWWRDIIRESTYQGHHTTPVQKSLRYGMTLFIISEVFFFAGFFWAFYHSSLAPTPRLGCHWPPTGITPLNPLEVPLLNTSVLLASGVTITWAHHSLMNGNRKQTIQALLITILLGTYFTLVQISEYFEAPFTISDGIYGSTFFVATGFHGLHVIIGSTFLLICLIRQLFYHFTPSHHFGFEAAAWYWHFVDVIWLFLYISIYWWGS.

Residues 1-15 are Mitochondrial matrix-facing; that stretch reads MTHQLHAYHMVKPSP. The chain crosses the membrane as a helical span at residues 16 to 34; that stretch reads WPLTGALSAFLLTSGLIMW. Residues 35–40 are Mitochondrial intermembrane-facing; sequence FHFYST. The chain crosses the membrane as a helical span at residues 41–66; it reads ALLTLGLLTNVLTMYQWWRDIIREST. At 67–72 the chain is on the mitochondrial matrix side; it reads YQGHHT. The helical transmembrane segment at 73 to 105 threads the bilayer; the sequence is TPVQKSLRYGMTLFIISEVFFFAGFFWAFYHSS. Topologically, residues 106–128 are mitochondrial intermembrane; the sequence is LAPTPRLGCHWPPTGITPLNPLE. A helical transmembrane segment spans residues 129–152; that stretch reads VPLLNTSVLLASGVTITWAHHSLM. The Mitochondrial matrix segment spans residues 153 to 155; it reads NGN. Residues 156 to 183 traverse the membrane as a helical segment; that stretch reads RKQTIQALLITILLGTYFTLVQISEYFE. The Mitochondrial intermembrane segment spans residues 184-190; sequence APFTISD. A helical transmembrane segment spans residues 191–223; sequence GIYGSTFFVATGFHGLHVIIGSTFLLICLIRQL. Topologically, residues 224–232 are mitochondrial matrix; the sequence is FYHFTPSHH. Residues 233-256 form a helical membrane-spanning segment; that stretch reads FGFEAAAWYWHFVDVIWLFLYISI. Residues 257 to 261 are Mitochondrial intermembrane-facing; that stretch reads YWWGS.

This sequence belongs to the cytochrome c oxidase subunit 3 family. In terms of assembly, component of the cytochrome c oxidase (complex IV, CIV), a multisubunit enzyme composed of 14 subunits. The complex is composed of a catalytic core of 3 subunits MT-CO1, MT-CO2 and MT-CO3, encoded in the mitochondrial DNA, and 11 supernumerary subunits COX4I, COX5A, COX5B, COX6A, COX6B, COX6C, COX7A, COX7B, COX7C, COX8 and NDUFA4, which are encoded in the nuclear genome. The complex exists as a monomer or a dimer and forms supercomplexes (SCs) in the inner mitochondrial membrane with NADH-ubiquinone oxidoreductase (complex I, CI) and ubiquinol-cytochrome c oxidoreductase (cytochrome b-c1 complex, complex III, CIII), resulting in different assemblies (supercomplex SCI(1)III(2)IV(1) and megacomplex MCI(2)III(2)IV(2)).

Its subcellular location is the mitochondrion inner membrane. The enzyme catalyses 4 Fe(II)-[cytochrome c] + O2 + 8 H(+)(in) = 4 Fe(III)-[cytochrome c] + 2 H2O + 4 H(+)(out). In terms of biological role, component of the cytochrome c oxidase, the last enzyme in the mitochondrial electron transport chain which drives oxidative phosphorylation. The respiratory chain contains 3 multisubunit complexes succinate dehydrogenase (complex II, CII), ubiquinol-cytochrome c oxidoreductase (cytochrome b-c1 complex, complex III, CIII) and cytochrome c oxidase (complex IV, CIV), that cooperate to transfer electrons derived from NADH and succinate to molecular oxygen, creating an electrochemical gradient over the inner membrane that drives transmembrane transport and the ATP synthase. Cytochrome c oxidase is the component of the respiratory chain that catalyzes the reduction of oxygen to water. Electrons originating from reduced cytochrome c in the intermembrane space (IMS) are transferred via the dinuclear copper A center (CU(A)) of subunit 2 and heme A of subunit 1 to the active site in subunit 1, a binuclear center (BNC) formed by heme A3 and copper B (CU(B)). The BNC reduces molecular oxygen to 2 water molecules using 4 electrons from cytochrome c in the IMS and 4 protons from the mitochondrial matrix. The polypeptide is Cytochrome c oxidase subunit 3 (MT-CO3) (Papio hamadryas (Hamadryas baboon)).